Here is a 1078-residue protein sequence, read N- to C-terminus: Cell wall acid trehalase ATC1 (1078 aa).

The signal sequence occupies residues 1–54 (MAANSSFFLADNCAPHNQSFIQFCIHAASKKKGRIALMCLANLFLLFSFHLLYA). Asn4, Asn17, Asn150, Asn184, Asn242, Asn287, Asn301, and Asn350 each carry an N-linked (GlcNAc...) asparagine glycan. 478–479 (WD) contacts substrate. N-linked (GlcNAc...) asparagine glycosylation is found at Asn532, Asn591, and Asn601. The active-site Proton donor is the Glu607. N-linked (GlcNAc...) asparagine glycosylation is found at Asn661 and Asn670. A substrate-binding site is contributed by 676–677 (KQ). Residues Asn829, Asn837, Asn904, Asn922, Asn931, Asn946, Asn1003, and Asn1037 are each glycosylated (N-linked (GlcNAc...) asparagine).

It belongs to the glycosyl hydrolase 65 family.

It localises to the secreted. It is found in the cell wall. It catalyses the reaction alpha,alpha-trehalose + H2O = alpha-D-glucose + beta-D-glucose. Its function is as follows. Cell wall acid trehalase that catalyzes hydrolysis of the disaccharide trehalose and required for growth on trehalose as carbon source. Plays a role in dimorphic conversion and virulence. The chain is Cell wall acid trehalase ATC1 (ATC1) from Candida albicans (strain SC5314 / ATCC MYA-2876) (Yeast).